The primary structure comprises 31 residues: Toxin BmKK16 (31 aa).

Residue Gln-1 is modified to Pyrrolidone carboxylic acid. Cystine bridges form between Cys-4/Cys-20, Cys-10/Cys-25, and Cys-14/Cys-27. A Proline amide modification is found at Pro-31.

Belongs to the short scorpion toxin superfamily. Potassium channel inhibitor family. Alpha-KTx 17 subfamily. In terms of processing, the N-terminus is blocked. In terms of tissue distribution, expressed by the venom gland.

The protein resides in the secreted. Blocker of potassium channels (Kv). The polypeptide is Toxin BmKK16 (Olivierus martensii (Manchurian scorpion)).